The chain runs to 71 residues: Small ribosomal subunit protein bS21 (71 aa).

Basic residues predominate over residues 48–59 (KAAAAVKRHAKK). The segment at 48 to 71 (KAAAAVKRHAKKVQRENRKFQRLY) is disordered. Residues 60 to 71 (VQRENRKFQRLY) are compositionally biased toward basic and acidic residues.

This sequence belongs to the bacterial ribosomal protein bS21 family.

In Teredinibacter turnerae (strain ATCC 39867 / T7901), this protein is Small ribosomal subunit protein bS21.